The following is a 427-amino-acid chain: Trigger factor (427 aa).

Residues 165-250 (GDTVVIDFEG…LHEIQEQVPA (86 aa)) form the PPIase FKBP-type domain.

This sequence belongs to the FKBP-type PPIase family. Tig subfamily.

The protein localises to the cytoplasm. It catalyses the reaction [protein]-peptidylproline (omega=180) = [protein]-peptidylproline (omega=0). Functionally, involved in protein export. Acts as a chaperone by maintaining the newly synthesized protein in an open conformation. Functions as a peptidyl-prolyl cis-trans isomerase. In Sulfurovum sp. (strain NBC37-1), this protein is Trigger factor.